Here is a 129-residue protein sequence, read N- to C-terminus: Fluoride-specific ion channel FluC 2 (129 aa).

4 helical membrane passes run 3 to 23, 32 to 52, 59 to 79, and 90 to 110; these read FLYV…MNLW, ATLA…RFLA, LVLL…FSAF, and GAWL…LIMV. Na(+) is bound by residues Gly-71 and Thr-74.

It belongs to the fluoride channel Fluc/FEX (TC 1.A.43) family.

It is found in the cell membrane. The catalysed reaction is fluoride(in) = fluoride(out). With respect to regulation, na(+) is not transported, but it plays an essential structural role and its presence is essential for fluoride channel function. In terms of biological role, fluoride-specific ion channel. Important for reducing fluoride concentration in the cell, thus reducing its toxicity. The protein is Fluoride-specific ion channel FluC 2 of Listeria monocytogenes serovar 1/2a (strain ATCC BAA-679 / EGD-e).